Here is a 207-residue protein sequence, read N- to C-terminus: Outer-membrane lipoprotein carrier protein (207 aa).

An N-terminal signal peptide occupies residues 1–21 (MRAIRMLLVSALTLGSVTAYA).

It belongs to the LolA family. In terms of assembly, monomer.

Its subcellular location is the periplasm. In terms of biological role, participates in the translocation of lipoproteins from the inner membrane to the outer membrane. Only forms a complex with a lipoprotein if the residue after the N-terminal Cys is not an aspartate (The Asp acts as a targeting signal to indicate that the lipoprotein should stay in the inner membrane). The sequence is that of Outer-membrane lipoprotein carrier protein from Pseudomonas putida (strain ATCC 47054 / DSM 6125 / CFBP 8728 / NCIMB 11950 / KT2440).